Reading from the N-terminus, the 428-residue chain is Adenylosuccinate synthetase (428 aa).

GTP contacts are provided by residues 12–18 and 40–42; these read GDEGKGK and GHT. Asp-13 (proton acceptor) is an active-site residue. Mg(2+) is bound by residues Asp-13 and Gly-40. Residues 13-16, 38-41, Thr-128, Arg-142, Gln-223, Thr-238, and Arg-302 each bind IMP; these read DEGK and NAGH. His-41 functions as the Proton donor in the catalytic mechanism. Residue 298–304 participates in substrate binding; sequence VTTGRPR. GTP-binding positions include Arg-304, 330-332, and 412-414; these read KLD and GTG.

It belongs to the adenylosuccinate synthetase family. Homodimer. It depends on Mg(2+) as a cofactor.

It localises to the cytoplasm. The catalysed reaction is IMP + L-aspartate + GTP = N(6)-(1,2-dicarboxyethyl)-AMP + GDP + phosphate + 2 H(+). The protein operates within purine metabolism; AMP biosynthesis via de novo pathway; AMP from IMP: step 1/2. Functionally, plays an important role in the de novo pathway of purine nucleotide biosynthesis. Catalyzes the first committed step in the biosynthesis of AMP from IMP. The polypeptide is Adenylosuccinate synthetase (Bifidobacterium animalis subsp. lactis (strain AD011)).